The chain runs to 309 residues: Ribokinase (309 aa).

Substrate is bound by residues 14-16, 42-46, and glutamate 143; these read NAD and GKGAN. ATP contacts are provided by residues asparagine 187 and 223–228; that span reads TLGSRG. Aspartate 249 and isoleucine 251 together coordinate K(+). ATP is bound by residues 254–255 and histidine 279; that span reads GD. Aspartate 255 serves as a coordination point for substrate. Residue aspartate 255 is the Proton acceptor of the active site. Alanine 285, arginine 288, glycine 290, and serine 294 together coordinate K(+).

This sequence belongs to the carbohydrate kinase PfkB family. Ribokinase subfamily. As to quaternary structure, homodimer. Mg(2+) is required as a cofactor.

It localises to the cytoplasm. It carries out the reaction D-ribose + ATP = D-ribose 5-phosphate + ADP + H(+). It functions in the pathway carbohydrate metabolism; D-ribose degradation; D-ribose 5-phosphate from beta-D-ribopyranose: step 2/2. Its activity is regulated as follows. Activated by a monovalent cation that binds near, but not in, the active site. The most likely occupant of the site in vivo is potassium. Ion binding induces a conformational change that may alter substrate affinity. Catalyzes the phosphorylation of ribose at O-5 in a reaction requiring ATP and magnesium. The resulting D-ribose-5-phosphate can then be used either for sythesis of nucleotides, histidine, and tryptophan, or as a component of the pentose phosphate pathway. The protein is Ribokinase of Escherichia coli O157:H7.